The following is a 252-amino-acid chain: Probable transcriptional regulatory protein Tmel_0985 (252 aa).

It belongs to the TACO1 family.

It localises to the cytoplasm. The polypeptide is Probable transcriptional regulatory protein Tmel_0985 (Thermosipho melanesiensis (strain DSM 12029 / CIP 104789 / BI429)).